We begin with the raw amino-acid sequence, 1049 residues long: ABC transporter ATM1 (1049 aa).

The N-terminal 90 residues, 1–90, are a transit peptide targeting the mitochondrion; the sequence is MRSFYNKCFT…NIFKNKGRLY (90 aa). 6 helical membrane-spanning segments follow: residues 357-377, 397-419, 481-501, 506-526, 591-611, and 619-639; these read IFCS…TPIL, IYST…VLSS, VMVF…YILT, YTVS…TTLI, FLNF…MYLT, and IFPF…AMPL. In terms of domain architecture, ABC transmembrane type-1 spans 360-651; that stretch reads SLFFLLCSKM…FGTIYRETKL (292 aa). One can recognise an ABC transporter domain in the interval 807-1043; that stretch reads LKNHKIINNS…NHFYREYYDS (237 aa). Residue 843 to 850 coordinates ATP; sequence GKSGSGKS.

Belongs to the ABC transporter superfamily. ABCB family. Heavy Metal importer (TC 3.A.1.210) subfamily. In terms of assembly, homodimer. Interacts with ISCU. Interacts with IscA2. Interacts with NBP35. Interacts with mHCF101.

The protein localises to the mitochondrion membrane. With respect to regulation, ATPase activity is stimulated by reduced glutathione. Transports glutathione-coordinated [4Fe-4S] iron-sulfur clusters in an ATP-dependent manner. Required for optimal parasite growth during erythrocytic stages. This Plasmodium falciparum (isolate 3D7) protein is ABC transporter ATM1.